Consider the following 42-residue polypeptide: uncharacterized protein (42 aa).

The chain crosses the membrane as a helical span at residues 15 to 37; the sequence is PLILAVDCAIIIPNTNFIHSFLI.

Its subcellular location is the membrane. This is an uncharacterized protein from Dictyostelium discoideum (Social amoeba).